The primary structure comprises 178 residues: Large ribosomal subunit protein bL17 (178 aa).

Positions 126–139 (DRARRVAASKKAEE) are enriched in basic and acidic residues. Residues 126–178 (DRARRVAASKKAEEQAPAAEAEEQAPAAEAEAPAADAAAEAKADEAAEDKKDA) are disordered. Low complexity predominate over residues 140 to 163 (QAPAAEAEEQAPAAEAEAPAADAA). A compositionally biased stretch (basic and acidic residues) spans 164–178 (AEAKADEAAEDKKDA).

This sequence belongs to the bacterial ribosomal protein bL17 family. As to quaternary structure, part of the 50S ribosomal subunit. Contacts protein L32.

This is Large ribosomal subunit protein bL17 from Nocardia farcinica (strain IFM 10152).